Here is a 144-residue protein sequence, read N- to C-terminus: Cystatin-F (144 aa).

An N-terminal signal peptide occupies residues 1–18; sequence MWLAILLALCCLTSDTHG. N-linked (GlcNAc...) asparagine glycosylation occurs at Asn-61. Residues 80-84 carry the Secondary area of contact motif; it reads QVVKG. 2 disulfide bridges follow: Cys-98-Cys-109 and Cys-123-Cys-143.

The protein belongs to the cystatin family.

The protein localises to the secreted. In terms of biological role, inhibits papain and cathepsin L but with affinities lower than other cystatins. May play a role in immune regulation through inhibition of a unique target in the hematopoietic system. The protein is Cystatin-F (Cst7) of Mus musculus (Mouse).